Consider the following 454-residue polypeptide: tRNA modification GTPase MnmE (454 aa).

Arginine 23, glutamate 80, and lysine 120 together coordinate (6S)-5-formyl-5,6,7,8-tetrahydrofolate. The TrmE-type G domain maps to 216 to 377 (GMKVVIAGRP…LRSHLKEAMG (162 aa)). Asparagine 226 is a K(+) binding site. Residues 226 to 231 (NAGKSS), 245 to 251 (TDIAGTT), 270 to 273 (DTAG), and 358 to 360 (SAR) contribute to the GTP site. Serine 230 is a binding site for Mg(2+). Positions 245, 247, and 250 each coordinate K(+). Threonine 251 is a Mg(2+) binding site. Lysine 454 provides a ligand contact to (6S)-5-formyl-5,6,7,8-tetrahydrofolate.

It belongs to the TRAFAC class TrmE-Era-EngA-EngB-Septin-like GTPase superfamily. TrmE GTPase family. Homodimer. Heterotetramer of two MnmE and two MnmG subunits. K(+) is required as a cofactor.

The protein localises to the cytoplasm. Its function is as follows. Exhibits a very high intrinsic GTPase hydrolysis rate. Involved in the addition of a carboxymethylaminomethyl (cmnm) group at the wobble position (U34) of certain tRNAs, forming tRNA-cmnm(5)s(2)U34. This is tRNA modification GTPase MnmE from Proteus mirabilis (strain HI4320).